The sequence spans 365 residues: Protein dbl-1 (365 aa).

Positions 1 to 42 (MNDSVRTTTTISSTKSLVHSFQLSAILHLFLLISFTPMSAAA) are cleaved as a signal peptide. The propeptide occupies 43-244 (DQHASHATRR…KRSAQTGNSE (202 aa)). N-linked (GlcNAc...) asparagine glycosylation is found at Asn110, Asn143, and Asn167. Positions 231–259 (SVRRKRSAQTGNSERKNRKKGRKHHNTEA) are disordered. A compositionally biased stretch (basic residues) spans 246–255 (KNRKKGRKHH). 3 cysteine pairs are disulfide-bonded: Cys264/Cys330, Cys293/Cys362, and Cys297/Cys364. N-linked (GlcNAc...) asparagine glycosylation occurs at Asn306.

The protein belongs to the TGF-beta family. In terms of assembly, homodimer; disulfide-linked. Interacts with drag-1. In terms of tissue distribution, expressed in embryos just prior to hatching and remains constant in most cells throughout the larval and adult stages. Expressed by AVA command interneurons.

The protein resides in the secreted. Functionally, ligand for the serine/threonine-protein kinase receptor type-1 sma-6 which activates a TGF-beta-like signaling pathway. Multifunctional protein that is involved in body size, male ectodermal patterning, innate immunity, lipid metabolism and neural plasticity. Dose-dependent regulator of body size, probably influencing the sizes of some or all cells rather than their number. Plays a role in patterning of male-specific genital sensilla (simple sense organs), known as rays, and mating-associated structures, spicules. Plays a protective role in response to infection by the Gram-negative bacterium S.marcescens, by activating expression of genes involved in innate immunity. Regulator of lipid homeostasis, acting non cell-autonomously in the hypodermis; partly dependent on the Insulin/IGF-1-like signaling (IIS) mediated pathway. Required for aversive olfactory learning of pathogenic bacteria in adults. Involved in gland cell morphology, possibly via activation of a Smad-independent TGF-beta signaling pathway. Required to oppose the autoregulation of expression of Runt-related transcription factor rnt-1. The sequence is that of Protein dbl-1 from Caenorhabditis elegans.